We begin with the raw amino-acid sequence, 431 residues long: TDP-daunosamine transferase DnrS (431 aa).

The N-terminal stretch at 1-23 is a signal peptide; that stretch reads MKVLVTAFAMDAHFNGVVPLAWA.

This sequence belongs to the glycosyltransferase 28 family.

It catalyses the reaction dTDP-beta-L-daunosamine + epsilon-rhodomycinone = rhodomycin D + dTDP + H(+). Its pathway is antibiotic biosynthesis; daunorubicin biosynthesis. The protein operates within antibiotic biosynthesis; carminomycin biosynthesis. Involved in the biosynthesis of the anthracyclines carminomycin and daunorubicin (daunomycin) which are aromatic polyketide antibiotics that exhibit high cytotoxicity and are widely applied in the chemotherapy of a variety of cancers. Catalyzes the addition of the TDP activated glycoside, L-daunosamine-TDP (2,3,6-trideoxy-3-aminohexose-TDP) at position C-7 of epsilon-rhodomycinone to yield rhodomycin D. Glycosylation is a prerequisite for biological activity of anthracyclines and requires DnrQ which seems to act as an activator. This Streptomyces peucetius protein is TDP-daunosamine transferase DnrS (dnrS).